The chain runs to 425 residues: RNA polymerase sigma factor SigA (425 aa).

Residues 193-263 (MVQSNLRLVV…TRAIADQSRT (71 aa)) are sigma-70 factor domain-2. An Interaction with polymerase core subunit RpoC motif is present at residues 217–220 (DLIQ). Residues 272–347 (ETISRIKKTT…EADGETPEDE (76 aa)) form a sigma-70 factor domain-3 region. The interval 360-413 (VLDTLSPRERDVLRLRYGLDDGRMKTLEEIGQIFNVTRERIRQIEAKALRKLRH) is sigma-70 factor domain-4. A DNA-binding region (H-T-H motif) is located at residues 386–405 (LEEIGQIFNVTRERIRQIEA).

It belongs to the sigma-70 factor family. RpoD/SigA subfamily. In terms of assembly, interacts transiently with the RNA polymerase catalytic core.

The protein localises to the cytoplasm. In terms of biological role, sigma factors are initiation factors that promote the attachment of RNA polymerase to specific initiation sites and are then released. This sigma factor is the primary sigma factor during exponential growth. This chain is RNA polymerase sigma factor SigA, found in Synechocystis sp. (strain ATCC 27184 / PCC 6803 / Kazusa).